We begin with the raw amino-acid sequence, 180 residues long: Ribulose bisphosphate carboxylase small subunit, chloroplastic 2 (180 aa).

The transit peptide at 1 to 56 (MASMISSSAVTTVSRASRGQSAAVAPFGGLKSMTGFPVKKVNTDITSITSNGGRVK) directs the protein to the chloroplast.

It belongs to the RuBisCO small chain family. In terms of assembly, heterohexadecamer of 8 large and 8 small subunits.

It is found in the plastid. It localises to the chloroplast. In terms of biological role, ruBisCO catalyzes two reactions: the carboxylation of D-ribulose 1,5-bisphosphate, the primary event in carbon dioxide fixation, as well as the oxidative fragmentation of the pentose substrate. Both reactions occur simultaneously and in competition at the same active site. Although the small subunit is not catalytic it is essential for maximal activity. The sequence is that of Ribulose bisphosphate carboxylase small subunit, chloroplastic 2 from Pisum sativum (Garden pea).